Here is a 71-residue protein sequence, read N- to C-terminus: Delta-actitoxin-Avd2b 2 (71 aa).

An N-terminal signal peptide occupies residues 1–20 (MNRLLVFLMLGAAFMLVVSA). The propeptide occupies 21–41 (NDAYGDEPAFKDLNQGDESLG). Cystine bridges form between Cys46–Cys61, Cys47–Cys55, and Cys49–Cys66.

The protein belongs to the sea anemone short toxin (type III) family.

The protein resides in the secreted. It is found in the nematocyst. Its function is as follows. Voltage-gated sodium channel (Nav) inhibitor. 1 uM completely inhibits insect voltage-gated sodium channel inactivation (DmNav1 from D.melanogaster). The chain is Delta-actitoxin-Avd2b 2 from Anemonia viridis (Snakelocks anemone).